Reading from the N-terminus, the 33-residue chain is MIFTLGWASLAAIFTFSIAMVVWGRNGDGSIDL.

The helical transmembrane segment at 2–22 threads the bilayer; that stretch reads IFTLGWASLAAIFTFSIAMVV.

This sequence belongs to the PetN family. The 4 large subunits of the cytochrome b6-f complex are cytochrome b6, subunit IV (17 kDa polypeptide, PetD), cytochrome f and the Rieske protein, while the 4 small subunits are PetG, PetL, PetM and PetN. The complex functions as a dimer.

The protein resides in the cellular thylakoid membrane. Component of the cytochrome b6-f complex, which mediates electron transfer between photosystem II (PSII) and photosystem I (PSI), cyclic electron flow around PSI, and state transitions. The sequence is that of Cytochrome b6-f complex subunit 8 from Prochlorococcus marinus (strain NATL2A).